A 633-amino-acid chain; its full sequence is Biosynthetic arginine decarboxylase (633 aa).

An N6-(pyridoxal phosphate)lysine modification is found at Lys101. Residue 284-294 coordinates substrate; sequence VDVGGGLGVDY.

It belongs to the Orn/Lys/Arg decarboxylase class-II family. SpeA subfamily. Mg(2+) is required as a cofactor. Pyridoxal 5'-phosphate serves as cofactor.

The catalysed reaction is L-arginine + H(+) = agmatine + CO2. Its pathway is amine and polyamine biosynthesis; agmatine biosynthesis; agmatine from L-arginine: step 1/1. Functionally, catalyzes the biosynthesis of agmatine from arginine. The protein is Biosynthetic arginine decarboxylase of Aeromonas hydrophila subsp. hydrophila (strain ATCC 7966 / DSM 30187 / BCRC 13018 / CCUG 14551 / JCM 1027 / KCTC 2358 / NCIMB 9240 / NCTC 8049).